A 129-amino-acid chain; its full sequence is Small ribosomal subunit protein uS11 (129 aa).

It belongs to the universal ribosomal protein uS11 family. As to quaternary structure, part of the 30S ribosomal subunit. Interacts with proteins S7 and S18. Binds to IF-3.

Functionally, located on the platform of the 30S subunit, it bridges several disparate RNA helices of the 16S rRNA. Forms part of the Shine-Dalgarno cleft in the 70S ribosome. In Azobacteroides pseudotrichonymphae genomovar. CFP2, this protein is Small ribosomal subunit protein uS11.